We begin with the raw amino-acid sequence, 967 residues long: Protein moonraker (967 aa).

A disordered region spans residues 178-201 (SHPGQSDLTVPNSPPTHDPGLQPH). Polar residues predominate over residues 179–188 (HPGQSDLTVP). Residues S287 and S409 each carry the phosphoserine modification. Disordered stretches follow at residues 401–431 (ALER…SRPS) and 490–601 (KAGK…SHLT). Over residues 525–543 (QSQPHSKSRVQQTTVSSRL) the composition is skewed to polar residues. A compositionally biased stretch (pro residues) spans 557–568 (WIPPNPTSPPAS). Residues 616–642 (AETSKRLKELEELKAKEIDSMQKQRLD) adopt a coiled-coil conformation. A phosphoserine mark is found at S700 and S826. Positions 849–872 (RPCNGNSLDESVGTEEGSEKREAP) are disordered. Residues 885-967 (GRAPLFVPPG…FTSEFLEAAT (83 aa)) are necessary and sufficient for CEP20-binding.

Interacts with CEP63. Interacts with WDR62. Forms a complex with OFD1 and CEP20/FOR20. Interacts with PCM1.

Its subcellular location is the cytoplasm. The protein localises to the cytoskeleton. It is found in the microtubule organizing center. It localises to the centrosome. The protein resides in the centriole. Its subcellular location is the centriolar satellite. Functionally, involved in centriole duplication. Positively regulates CEP63 centrosomal localization. Required for WDR62 centrosomal localization and promotes the centrosomal localization of CDK2. May play a role in cilium assembly. This is Protein moonraker (KIAA0753) from Homo sapiens (Human).